The primary structure comprises 340 residues: MDESKRKALENALKAIEKEFGKGAVMRLGEMPKQQVDVIPTGSLALDLALGIGGIPRGRIVEIYGPESGGKTTLALTIIAQAQRRGGVAAFVDAEHALDPLYAQRLGVQVEDLLVSQPDTGEQALEIVELLARSGAVDVIVVDSVAALVPGAEIEGEMGDQHVGLQARLMSQALRKLTAVLAKSNTAAIFINQVREKVGVTYGNPETTPGGRALKFYASVRLDVRKSGQPIKVGNEAVGVKVRVKVVKNKLAPPFREAELEIYFGRGLDPVADLVNVAVAAGVIEKAGSWFSYGELRLGQGKEKAAEALRERPELLEEIRAKVLERSDQVVLAAGEDEGE.

Residue 65–72 coordinates ATP; the sequence is GPESGGKT.

Belongs to the RecA family.

Its subcellular location is the cytoplasm. Its function is as follows. Can catalyze the hydrolysis of ATP in the presence of single-stranded DNA, the ATP-dependent uptake of single-stranded DNA by duplex DNA, and the ATP-dependent hybridization of homologous single-stranded DNAs. It interacts with LexA causing its activation and leading to its autocatalytic cleavage. The protein is Protein RecA of Thermus thermophilus.